Reading from the N-terminus, the 304-residue chain is MTAPNEPGALSKGDGPNADGLVDRGGAHRAATGPGRIPDAGDPPPWQRAATRQSQAGHRQPPPVSHPEGRPTNPPAAADARLNRFISGASAPVTGPAAAVRTPQPDPDASLGCGDGSPAEAYASELPDLSGPTPRAPQRNPAPARPAEGGAGSRGDSAAGSSGGRSITAESRDARVQLSARRSRGPVRASMQIRRIDPWSTLKVSLLLSVALFFVWMITVAFLYLVLGGMGVWAKLNSNVGDLLNNASGSSAELVSSGTIFGGAFLIGLVNIVLMTALATIGAFVYNLITDLIGGIEVTLADRD.

The tract at residues Met-1 to Ser-183 is disordered. A compositionally biased stretch (low complexity) spans Pro-132–Ser-166. 2 helical membrane-spanning segments follow: residues Leu-206–Val-226 and Phe-265–Val-285.

The protein to M.leprae ML0007.

It localises to the cell membrane. This is an uncharacterized protein from Mycobacterium tuberculosis (strain ATCC 25618 / H37Rv).